We begin with the raw amino-acid sequence, 110 residues long: Iron-sulfur cluster assembly protein CyaY (110 aa).

The protein belongs to the frataxin family.

Its function is as follows. Involved in iron-sulfur (Fe-S) cluster assembly. May act as a regulator of Fe-S biogenesis. The polypeptide is Iron-sulfur cluster assembly protein CyaY (Variovorax paradoxus (strain S110)).